Consider the following 238-residue polypeptide: tRNA (guanine-N(7)-)-methyltransferase (238 aa).

E68, E93, D120, and D143 together coordinate S-adenosyl-L-methionine. D143 is an active-site residue. Substrate-binding positions include K147, D179, and 216-219 (TKFE).

This sequence belongs to the class I-like SAM-binding methyltransferase superfamily. TrmB family.

The catalysed reaction is guanosine(46) in tRNA + S-adenosyl-L-methionine = N(7)-methylguanosine(46) in tRNA + S-adenosyl-L-homocysteine. It participates in tRNA modification; N(7)-methylguanine-tRNA biosynthesis. Catalyzes the formation of N(7)-methylguanine at position 46 (m7G46) in tRNA. This is tRNA (guanine-N(7)-)-methyltransferase from Shewanella baltica (strain OS195).